The following is a 516-amino-acid chain: Gamma-aminobutyrate transaminase 1, mitochondrial (516 aa).

The transit peptide at 1–47 (MVIARGLLRSNASSSSSQAINLLKYVTSTGSLQGHTQNLCDASTRHF) directs the protein to the mitochondrion. Residues 45–60 (RHFSSVPSPQSNSTEE) are compositionally biased toward polar residues. The segment at 45-64 (RHFSSVPSPQSNSTEENGFK) is disordered. 171-172 (GS) provides a ligand contact to pyridoxal 5'-phosphate. Residue Tyr-204 coordinates substrate. Asp-311 contacts pyridoxal 5'-phosphate. Lys-340 contributes to the substrate binding site. Position 340 is an N6-(pyridoxal phosphate)lysine (Lys-340).

It belongs to the class-III pyridoxal-phosphate-dependent aminotransferase family.

The protein localises to the mitochondrion. The catalysed reaction is 4-aminobutanoate + pyruvate = succinate semialdehyde + L-alanine. It carries out the reaction 4-aminobutanoate + glyoxylate = succinate semialdehyde + glycine. Functionally, transaminase that degrades gamma-amino butyric acid (GABA) and uses pyruvate as amino-group acceptor, but not 2-oxoglutarate. In Oryza sativa subsp. indica (Rice), this protein is Gamma-aminobutyrate transaminase 1, mitochondrial.